We begin with the raw amino-acid sequence, 700 residues long: UvrABC system protein B (700 aa).

A Helicase ATP-binding domain is found at 26-183 (SGLHRGDRIQ…RALVGIQYLR (158 aa)). 39–46 (GVTGSGKT) contributes to the ATP binding site. The short motif at 92-115 (YYDYYQPEAYVPSSDTYIEKDASI) is the Beta-hairpin element. One can recognise a Helicase C-terminal domain in the interval 430–596 (QVDDLLHEIR…GVTKSVDEVR (167 aa)). Positions 608–627 (REGEAPAPRRLASESAPRSR) are disordered. One can recognise a UVR domain in the interval 631–666 (ETLVGELEIAMREAAVALDFEAAARLRDQLFEVRTA). The interval 667-700 (LGQAPSEARGNAQAPKRPPGSAPQRRAGGGRRGR) is disordered.

This sequence belongs to the UvrB family. As to quaternary structure, forms a heterotetramer with UvrA during the search for lesions. Interacts with UvrC in an incision complex.

Its subcellular location is the cytoplasm. The UvrABC repair system catalyzes the recognition and processing of DNA lesions. A damage recognition complex composed of 2 UvrA and 2 UvrB subunits scans DNA for abnormalities. Upon binding of the UvrA(2)B(2) complex to a putative damaged site, the DNA wraps around one UvrB monomer. DNA wrap is dependent on ATP binding by UvrB and probably causes local melting of the DNA helix, facilitating insertion of UvrB beta-hairpin between the DNA strands. Then UvrB probes one DNA strand for the presence of a lesion. If a lesion is found the UvrA subunits dissociate and the UvrB-DNA preincision complex is formed. This complex is subsequently bound by UvrC and the second UvrB is released. If no lesion is found, the DNA wraps around the other UvrB subunit that will check the other stand for damage. The polypeptide is UvrABC system protein B (Gemmatimonas aurantiaca (strain DSM 14586 / JCM 11422 / NBRC 100505 / T-27)).